A 571-amino-acid polypeptide reads, in one-letter code: Proline--tRNA ligase (571 aa).

It belongs to the class-II aminoacyl-tRNA synthetase family. ProS type 1 subfamily. Homodimer.

Its subcellular location is the cytoplasm. The catalysed reaction is tRNA(Pro) + L-proline + ATP = L-prolyl-tRNA(Pro) + AMP + diphosphate. Functionally, catalyzes the attachment of proline to tRNA(Pro) in a two-step reaction: proline is first activated by ATP to form Pro-AMP and then transferred to the acceptor end of tRNA(Pro). As ProRS can inadvertently accommodate and process non-cognate amino acids such as alanine and cysteine, to avoid such errors it has two additional distinct editing activities against alanine. One activity is designated as 'pretransfer' editing and involves the tRNA(Pro)-independent hydrolysis of activated Ala-AMP. The other activity is designated 'posttransfer' editing and involves deacylation of mischarged Ala-tRNA(Pro). The misacylated Cys-tRNA(Pro) is not edited by ProRS. In Proteus mirabilis (strain HI4320), this protein is Proline--tRNA ligase.